A 471-amino-acid polypeptide reads, in one-letter code: MFQAAVGPLQTNISLPEETPGLELNWAALLIVMVIIPTIGGNILVILAVWLEKKLQNATNFFLMSLAVADLLVGLLVMPIALITILYDSDWPLPEPLCPIWLFLDVLFSTASIMHLCAISLDRYIAIKKPIQHSQYKSRAKVMLKIALVWLISICIAIPIPIKGLRNYPHPNNITFTSNHTCVLKTDTFQEFIIFGSLVAFFIPLTIMMIIYFLTVRVLRKKVYLLRSKVTQRFSYPIISTVFQREQAANPPQPEQPDSTGNSLARIQEKTDTDGMSSPTGDEKSFRRLSTMGKKSMQTLTNEQRASKVLGIVFLLFVVMWCPFFITNITSALCGPCDANIIGRLMEIFSWVGYVSSGINPLVYTLFNKTFRQAFTRYITCNYRNFASKEQGRSFRASTVDRMLTHISPRSSVAENAKLFTKQEIKNETTDYRSPLGCLQPSAQTSTGVVLDKILLTHTENCKQEERVSCV.

Residues 1–26 (MFQAAVGPLQTNISLPEETPGLELNW) lie on the Extracellular side of the membrane. N12 carries an N-linked (GlcNAc...) asparagine glycan. The chain crosses the membrane as a helical span at residues 27–49 (AALLIVMVIIPTIGGNILVILAV). At 50–60 (WLEKKLQNATN) the chain is on the cytoplasmic side. Residues 61–83 (FFLMSLAVADLLVGLLVMPIALI) traverse the membrane as a helical segment. The Extracellular portion of the chain corresponds to 84–99 (TILYDSDWPLPEPLCP). A disulfide bridge links C98 with C182. The chain crosses the membrane as a helical span at residues 100 to 121 (IWLFLDVLFSTASIMHLCAISL). Ergotamine is bound by residues D105 and T110. The DRY motif; important for ligand-induced conformation changes motif lies at 122-124 (DRY). The Cytoplasmic segment spans residues 122–141 (DRYIAIKKPIQHSQYKSRAK). The helical transmembrane segment at 142–162 (VMLKIALVWLISICIAIPIPI) threads the bilayer. Topologically, residues 163 to 191 (KGLRNYPHPNNITFTSNHTCVLKTDTFQE) are extracellular. N-linked (GlcNAc...) asparagine glycans are attached at residues N173 and N179. An ergotamine-binding site is contributed by L184. The short motif at 187–190 (DTFQ) is the [DE]RFG motif; may stabilize a conformation that preferentially activates signaling via beta-arrestin family members element. Residues 192 to 214 (FIIFGSLVAFFIPLTIMMIIYFL) traverse the membrane as a helical segment. At 215-308 (TVRVLRKKVY…TLTNEQRASK (94 aa)) the chain is on the cytoplasmic side. Residues 309–329 (VLGIVFLLFVVMWCPFFITNI) form a helical membrane-spanning segment. Over 330–344 (TSALCGPCDANIIGR) the chain is Extracellular. The cysteines at positions 334 and 337 are disulfide-linked. The chain crosses the membrane as a helical span at residues 345-366 (LMEIFSWVGYVSSGINPLVYTL). Residues 360 to 364 (NPLVY) carry the NPxxY motif; important for ligand-induced conformation changes and signaling motif. The Cytoplasmic portion of the chain corresponds to 367–471 (FNKTFRQAFT…CKQEERVSCV (105 aa)). C381 is lipidated: S-palmitoyl cysteine. Positions 469–471 (SCV) match the PDZ-binding motif.

It belongs to the G-protein coupled receptor 1 family. Detected in brain, heart and gut.

The protein localises to the cell membrane. It localises to the synapse. It is found in the synaptosome. G-protein coupled receptor for 5-hydroxytryptamine (serotonin). Also functions as a receptor for various ergot alkaloid derivatives and psychoactive substances. Ligand binding causes a conformation change that triggers signaling via guanine nucleotide-binding proteins (G proteins) and modulates the activity of downstream effectors. HTR2B is coupled to G(q)/G(11) G alpha proteins and activates phospholipase C-beta, releasing diacylglycerol (DAG) and inositol 1,4,5-trisphosphate (IP3) second messengers that modulate the activity of phosphatidylinositol 3-kinase and promote the release of Ca(2+) ions from intracellular stores, respectively. Beta-arrestin family members inhibit signaling via G proteins and mediate activation of alternative signaling pathways. Plays a role in the regulation of dopamine and 5-hydroxytryptamine release, 5-hydroxytryptamine uptake and in the regulation of extracellular dopamine and 5-hydroxytryptamine levels, and thereby affects neural activity. The polypeptide is 5-hydroxytryptamine receptor 2B (htr2b) (Dichotomyctere fluviatilis (Green pufferfish)).